The sequence spans 157 residues: Siroheme decarboxylase NirG subunit (157 aa).

It belongs to the Ahb/Nir family. Forms a complex composed of NirDL, NirG and NirH. All proteins are required for the total conversion of siroheme to didecarboxysiroheme.

It catalyses the reaction siroheme + 2 H(+) = 12,18-didecarboxysiroheme + 2 CO2. It functions in the pathway porphyrin-containing compound metabolism. Involved in heme d1 biosynthesis. Catalyzes the decarboxylation of siroheme into didecarboxysiroheme. Siroheme is probably decarboxylated to monodecarboxysiroheme, which is in turn decarboxylated to didecarboxysiroheme. The protein is Siroheme decarboxylase NirG subunit of Paracoccus pantotrophus (Thiosphaera pantotropha).